The primary structure comprises 269 residues: 4-hydroxy-tetrahydrodipicolinate reductase (269 aa).

NAD(+) contacts are provided by residues 8 to 13 and E34; that span reads GAAGRM. R35 lines the NADP(+) pocket. NAD(+) is bound by residues 98–100 and 122–125; these read GTT and APNY. H155 serves as the catalytic Proton donor/acceptor. A (S)-2,3,4,5-tetrahydrodipicolinate-binding site is contributed by H156. The active-site Proton donor is K159. 165–166 provides a ligand contact to (S)-2,3,4,5-tetrahydrodipicolinate; sequence GT.

Belongs to the DapB family.

The protein resides in the cytoplasm. It carries out the reaction (S)-2,3,4,5-tetrahydrodipicolinate + NAD(+) + H2O = (2S,4S)-4-hydroxy-2,3,4,5-tetrahydrodipicolinate + NADH + H(+). The catalysed reaction is (S)-2,3,4,5-tetrahydrodipicolinate + NADP(+) + H2O = (2S,4S)-4-hydroxy-2,3,4,5-tetrahydrodipicolinate + NADPH + H(+). The protein operates within amino-acid biosynthesis; L-lysine biosynthesis via DAP pathway; (S)-tetrahydrodipicolinate from L-aspartate: step 4/4. Its function is as follows. Catalyzes the conversion of 4-hydroxy-tetrahydrodipicolinate (HTPA) to tetrahydrodipicolinate. The sequence is that of 4-hydroxy-tetrahydrodipicolinate reductase from Vibrio atlanticus (strain LGP32) (Vibrio splendidus (strain Mel32)).